A 359-amino-acid polypeptide reads, in one-letter code: Flavonoid 8-O-methyltransferase 1 (359 aa).

Asp223 provides a ligand contact to S-adenosyl-L-methionine. Residue His261 is the Proton acceptor of the active site.

This sequence belongs to the class I-like SAM-binding methyltransferase superfamily. Cation-independent O-methyltransferase family. Expressed in leaves and trichomes, especially in cv. SD and cv. EMX-1, but barely in cv. MC and cv. SW.

It carries out the reaction an 8-hydroxyflavone + S-adenosyl-L-methionine = an 8-methoxyflavone + S-adenosyl-L-homocysteine + H(+). The enzyme catalyses 4',7,8-trihydroxyflavone + S-adenosyl-L-methionine = 4',7-dihydroxy-8-methoxyflavone + S-adenosyl-L-homocysteine + H(+). The catalysed reaction is 7,8-dihydroxyflavone + S-adenosyl-L-methionine = 7-hydroxy-8-methoxyflavone + S-adenosyl-L-homocysteine + H(+). It catalyses the reaction 3',4',7,8-tetrahydroxyflavone + S-adenosyl-L-methionine = 3',4,7-trihydroxy-8-methoxyflavone + S-adenosyl-L-homocysteine + H(+). The protein operates within flavonoid metabolism. With respect to regulation, strongly inhibited by gardenin B (GARD B). In terms of biological role, cation-independent flavonoid 8-O-methyltransferase involved in the biosynthesis of polymethoxylated flavonoids natural products such as nevadensin and salvigenin, aroma compounds which contribute to the flavor of sweet basil, and exhibit pharmacological activities such as anti-allergic, anti-oxidant, antibacterial, anti-proliferative, and anti-inflammatory effects. Catalyzes S-adenosylmethionine-dependent regioselective 8-O-methylation of flavonoids; mediates likely the conversion of pilosin (PIL) to nevadensin (NEV) and of 8-hydroxysalvigenin (8-OH-SALV) to gardenin B (GARD B). Can also use 3',4',7,8-tetrahydroxyflavone as substrate. Accepts other unnatural O-diphenols including 7,8,4'-trihydroxy-flavone and 7-O-methyl-8-hydroxy-flavone, and, with a lower efficiency, 7,8-dihydroxy-flavone, as substrates. The protein is Flavonoid 8-O-methyltransferase 1 of Ocimum basilicum (Sweet basil).